Here is a 307-residue protein sequence, read N- to C-terminus: Transmembrane and coiled-coil domain-containing protein 5B (307 aa).

A coiled-coil region spans residues 20 to 212; sequence TLEAIKQNLK…SKAQNDSSQV (193 aa). A helical membrane pass occupies residues 246–268; the sequence is YLFFMVMIVIRLLGYVFFHLQYV.

Belongs to the TMCO5 family.

The protein resides in the membrane. In Mus musculus (Mouse), this protein is Transmembrane and coiled-coil domain-containing protein 5B (Tmco5b).